A 651-amino-acid chain; its full sequence is Probable export ATP-binding/permease protein Pfl01_2215 (651 aa).

The region spanning 6 to 244 (LQLTGISRSF…LSNEDAVPKS (239 aa)) is the ABC transporter domain. Position 42–49 (42–49 (GASGSGKS)) interacts with ATP. Helical transmembrane passes span 250–270 (LVAS…ALIS), 276–296 (LLTM…SAIG), 524–544 (LALL…IGVM), 585–605 (LGGA…SLFI), and 614–634 (LTSV…FGFV).

The protein belongs to the ABC transporter superfamily. Macrolide exporter (TC 3.A.1.122) family. Probably part of a tripartite efflux system, which is composed of an inner membrane transporter, a periplasmic membrane fusion protein, and an outer membrane component.

The protein localises to the cell inner membrane. Probably part of a tripartite efflux system. The sequence is that of Probable export ATP-binding/permease protein Pfl01_2215 from Pseudomonas fluorescens (strain Pf0-1).